Consider the following 643-residue polypeptide: Thread biopolymer filament subunit alpha (643 aa).

Polar residues predominate over residues 1 to 13 (MSISQTVSKSYTK). The segment at 1 to 34 (MSISQTVSKSYTKSVSRGGQGVSYSQSSSHKVGG) is disordered. A head region spans residues 1-191 (MSISQTVSKS…PDTVQHTRIR (191 aa)). Low complexity predominate over residues 14–31 (SVSRGGQGVSYSQSSSHK). The IF rod domain occupies 192 to 510 (EKQDLQTLNT…KLLDSEETRI (319 aa)). The segment at 193–227 (KQDLQTLNTKFANLVDQVRTLEQHNAILKAQISMI) is coil 1A. A linker 1 region spans residues 228 to 240 (TSPSDTPEGPVNT). The coil 1B stretch occupies residues 241 to 341 (AVVASTVTAT…YNARVREVQA (101 aa)). The segment at 342–362 (AVTGGPTAAYSIRVDNTHQAI) is linker 12. Residues 363 to 381 (DLTTSLQEMKTHYEVLATK) are coil 2A. A linker 2 region spans residues 382-389 (SREEAFTQ). Positions 390 to 510 (VQPRIQEMAV…KLLDSEETRI (121 aa)) are coil 2B. Residues 511-643 (SHGGGITITT…SSARSSSRIY (133 aa)) form a tail region. Residues 622–643 (SRAGYSASRKSYSSARSSSRIY) are disordered.

This sequence belongs to the intermediate filament family. As to quaternary structure, coiled-coil heterodimer of an alpha and a gamma subunit. Assemble into 10 nm filaments. Forms a massive, conical, intermediate filament biopolymer of approximately 60 cm.

The protein localises to the secreted. It localises to the extracellular space. Its function is as follows. Released extracellularly into seawater and provides physical and biological defense against invasive organism by modulation of the viscoelastic properties of mucus. This Eptatretus stoutii (Pacific hagfish) protein is Thread biopolymer filament subunit alpha.